We begin with the raw amino-acid sequence, 335 residues long: Acetyl-coenzyme A carboxylase carboxyl transferase subunit alpha (335 aa).

Residues Q40–A294 form the CoA carboxyltransferase C-terminal domain.

It belongs to the AccA family. In terms of assembly, acetyl-CoA carboxylase is a heterohexamer composed of biotin carboxyl carrier protein (AccB), biotin carboxylase (AccC) and two subunits each of ACCase subunit alpha (AccA) and ACCase subunit beta (AccD).

It is found in the cytoplasm. The catalysed reaction is N(6)-carboxybiotinyl-L-lysyl-[protein] + acetyl-CoA = N(6)-biotinyl-L-lysyl-[protein] + malonyl-CoA. The protein operates within lipid metabolism; malonyl-CoA biosynthesis; malonyl-CoA from acetyl-CoA: step 1/1. Functionally, component of the acetyl coenzyme A carboxylase (ACC) complex. First, biotin carboxylase catalyzes the carboxylation of biotin on its carrier protein (BCCP) and then the CO(2) group is transferred by the carboxyltransferase to acetyl-CoA to form malonyl-CoA. This is Acetyl-coenzyme A carboxylase carboxyl transferase subunit alpha from Prochlorococcus marinus (strain AS9601).